Reading from the N-terminus, the 580-residue chain is 2-succinyl-5-enolpyruvyl-6-hydroxy-3-cyclohexene-1-carboxylate synthase (580 aa).

This sequence belongs to the TPP enzyme family. MenD subfamily. Homodimer. It depends on Mg(2+) as a cofactor. The cofactor is Mn(2+). Requires thiamine diphosphate as cofactor.

The enzyme catalyses isochorismate + 2-oxoglutarate + H(+) = 5-enolpyruvoyl-6-hydroxy-2-succinyl-cyclohex-3-ene-1-carboxylate + CO2. Its pathway is quinol/quinone metabolism; 1,4-dihydroxy-2-naphthoate biosynthesis; 1,4-dihydroxy-2-naphthoate from chorismate: step 2/7. It functions in the pathway quinol/quinone metabolism; menaquinone biosynthesis. Its function is as follows. Catalyzes the thiamine diphosphate-dependent decarboxylation of 2-oxoglutarate and the subsequent addition of the resulting succinic semialdehyde-thiamine pyrophosphate anion to isochorismate to yield 2-succinyl-5-enolpyruvyl-6-hydroxy-3-cyclohexene-1-carboxylate (SEPHCHC). The protein is 2-succinyl-5-enolpyruvyl-6-hydroxy-3-cyclohexene-1-carboxylate synthase of Listeria monocytogenes serotype 4b (strain F2365).